The chain runs to 232 residues: 7-cyano-7-deazaguanine synthase (232 aa).

13-23 serves as a coordination point for ATP; sequence LSGGLDSATVL. Zn(2+) contacts are provided by cysteine 194, cysteine 204, cysteine 207, and cysteine 210.

It belongs to the QueC family. It depends on Zn(2+) as a cofactor.

The enzyme catalyses 7-carboxy-7-deazaguanine + NH4(+) + ATP = 7-cyano-7-deazaguanine + ADP + phosphate + H2O + H(+). It participates in purine metabolism; 7-cyano-7-deazaguanine biosynthesis. Functionally, catalyzes the ATP-dependent conversion of 7-carboxy-7-deazaguanine (CDG) to 7-cyano-7-deazaguanine (preQ(0)). This chain is 7-cyano-7-deazaguanine synthase, found in Hydrogenovibrio crunogenus (strain DSM 25203 / XCL-2) (Thiomicrospira crunogena).